Consider the following 475-residue polypeptide: Dihydrolipoyl dehydrogenase (475 aa).

FAD contacts are provided by residues 37-46, lysine 55, and alanine 118; that span reads EQYYSLGGVC. Cysteine 46 and cysteine 51 are joined by a disulfide. NAD(+) is bound by residues 183 to 187, aspartate 206, valine 239, and 272 to 275; these read GGGII and AIGR. Positions 315 and 323 each coordinate FAD. Histidine 447 (proton acceptor) is an active-site residue.

Belongs to the class-I pyridine nucleotide-disulfide oxidoreductase family. In terms of assembly, homodimer. FAD serves as cofactor.

It is found in the cytoplasm. The enzyme catalyses N(6)-[(R)-dihydrolipoyl]-L-lysyl-[protein] + NAD(+) = N(6)-[(R)-lipoyl]-L-lysyl-[protein] + NADH + H(+). Functionally, lipoamide dehydrogenase is a component of the alpha-ketoacid dehydrogenase complexes. In Buchnera aphidicola subsp. Baizongia pistaciae (strain Bp), this protein is Dihydrolipoyl dehydrogenase (lpdA).